Reading from the N-terminus, the 129-residue chain is Thyroid hormone receptor alpha (129 aa).

Positions 26–129 (AEWELIRMVT…EIMSLRAAVR (104 aa)) constitute an NR LBD domain. Arginine 91 contributes to the 3,3',5-triiodo-L-thyronine binding site.

This sequence belongs to the nuclear hormone receptor family. NR1 subfamily.

The protein resides in the nucleus. In terms of biological role, nuclear hormone receptor that can act as a repressor or activator of transcription. High affinity receptor for thyroid hormones, including triiodothyronine and thyroxine. The sequence is that of Thyroid hormone receptor alpha (thra1) from Sparus aurata (Gilthead sea bream).